The sequence spans 406 residues: Phosphopentomutase (406 aa).

Residues aspartate 10, aspartate 305, histidine 310, aspartate 346, histidine 347, and histidine 358 each coordinate Mn(2+).

Belongs to the phosphopentomutase family. Mn(2+) serves as cofactor.

The protein resides in the cytoplasm. It carries out the reaction 2-deoxy-alpha-D-ribose 1-phosphate = 2-deoxy-D-ribose 5-phosphate. It catalyses the reaction alpha-D-ribose 1-phosphate = D-ribose 5-phosphate. The protein operates within carbohydrate degradation; 2-deoxy-D-ribose 1-phosphate degradation; D-glyceraldehyde 3-phosphate and acetaldehyde from 2-deoxy-alpha-D-ribose 1-phosphate: step 1/2. In terms of biological role, isomerase that catalyzes the conversion of deoxy-ribose 1-phosphate (dRib-1-P) and ribose 1-phosphate (Rib-1-P) to deoxy-ribose 5-phosphate (dRib-5-P) and ribose 5-phosphate (Rib-5-P), respectively. The sequence is that of Phosphopentomutase from Vibrio vulnificus (strain CMCP6).